A 789-amino-acid chain; its full sequence is Transducer protein Htr6 (789 aa).

Transmembrane regions (helical) follow at residues 29–49 (FAVA…FAFQ) and 294–314 (TVTV…IALG). 2 HAMP domains span residues 315–367 (RHTV…DRIQ) and 409–462 (ERLQ…ATIA). A Methyl-accepting transducer domain is found at 481–717 (GAEEIETTSQ…SVVRRVDDVA (237 aa)). The segment at 763–789 (NQFETRADADEPDADTTVDASADDTGD) is disordered. Residues 772–789 (DEPDADTTVDASADDTGD) show a composition bias toward acidic residues.

The protein belongs to the methyl-accepting chemotaxis (MCP) protein family. In terms of processing, methylated by CheR.

The protein localises to the cell membrane. In terms of biological role, potentially involved in chemo- or phototactic signal transduction. This Halobacterium salinarum (strain ATCC 29341 / DSM 671 / R1) protein is Transducer protein Htr6 (htr6).